The following is a 215-amino-acid chain: Putative O-methyltransferase MAB_1361c (215 aa).

S-adenosyl-L-methionine-binding positions include valine 42, glutamate 64, 66–67, serine 72, aspartate 90, and valine 91; that span reads GT. Aspartate 138 serves as a coordination point for substrate.

The protein belongs to the class I-like SAM-binding methyltransferase superfamily. Cation-dependent O-methyltransferase family.

The chain is Putative O-methyltransferase MAB_1361c from Mycobacteroides abscessus (strain ATCC 19977 / DSM 44196 / CCUG 20993 / CIP 104536 / JCM 13569 / NCTC 13031 / TMC 1543 / L948) (Mycobacterium abscessus).